The following is a 192-amino-acid chain: Peptide methionine sulfoxide reductase MsrA 1 (192 aa).

Cys25 is a catalytic residue.

It belongs to the MsrA Met sulfoxide reductase family.

The enzyme catalyses L-methionyl-[protein] + [thioredoxin]-disulfide + H2O = L-methionyl-(S)-S-oxide-[protein] + [thioredoxin]-dithiol. It carries out the reaction [thioredoxin]-disulfide + L-methionine + H2O = L-methionine (S)-S-oxide + [thioredoxin]-dithiol. Has an important function as a repair enzyme for proteins that have been inactivated by oxidation. Catalyzes the reversible oxidation-reduction of methionine sulfoxide in proteins to methionine. This chain is Peptide methionine sulfoxide reductase MsrA 1, found in Rhodopirellula baltica (strain DSM 10527 / NCIMB 13988 / SH1).